Consider the following 493-residue polypeptide: Succinate-semialdehyde dehydrogenase [NADP(+)] 2 (493 aa).

NAD(+) is bound at residue 242-247 (GSTNVG). Residue E264 is part of the active site. The active-site Nucleophile is the C298.

The protein belongs to the aldehyde dehydrogenase family. In terms of assembly, homotetramer.

Its subcellular location is the cytoplasm. The enzyme catalyses succinate semialdehyde + NAD(+) + H2O = succinate + NADH + 2 H(+). The catalysed reaction is succinate semialdehyde + NADP(+) + H2O = succinate + NADPH + 2 H(+). It functions in the pathway amino-acid degradation; 4-aminobutanoate degradation. In terms of biological role, catalyzes the oxidation of succinate semialdehyde to succinate. Can utilize both NAD(+) or NADP(+) as a coenzyme. Functions in the GABA shunt, which allows to bypass 2 reactions in the TCA cycle by removing alpha-ketoglutarate from the cycle and feeding succinate and NADH back into the cycle. This is Succinate-semialdehyde dehydrogenase [NADP(+)] 2 (ssd2) from Schizosaccharomyces pombe (strain 972 / ATCC 24843) (Fission yeast).